The primary structure comprises 241 residues: uncharacterized protein (241 aa).

Residues 32 to 86 enclose the HTH cro/C1-type domain; it reads LKKWRNLFNIQQIELAKYLNVSPSVISDYEVGRRKNPGVNIIKKYVLALIEIDKE. The segment at residues 43–62 is a DNA-binding region (H-T-H motif); it reads QIELAKYLNVSPSVISDYEV.

This is an uncharacterized protein from Methanocaldococcus jannaschii (strain ATCC 43067 / DSM 2661 / JAL-1 / JCM 10045 / NBRC 100440) (Methanococcus jannaschii).